Here is a 75-residue protein sequence, read N- to C-terminus: Metallothionein-like protein 1 (75 aa).

This sequence belongs to the metallothionein superfamily. Type 15 family.

In terms of biological role, metallothioneins have a high content of cysteine residues that bind various heavy metals. In Triticum aestivum (Wheat), this protein is Metallothionein-like protein 1 (ALI1).